The sequence spans 165 residues: Keratin-associated protein 5-7 (165 aa).

7 consecutive repeat copies span residues 35–38 (CCVP), 41–44 (CCKP), 47–50 (CCVP), 116–119 (CCKP), 126–129 (CCKP), 145–148 (CCNP), and 155–158 (CCVP). Residues 35-158 (CCVPVCCCKP…CCSQSSCCVP (124 aa)) form a 7 X 4 AA repeats of C-C-X-P region.

The protein belongs to the KRTAP type 5 family. Interacts with hair keratins. Expressed in hair root but not in skin.

Its function is as follows. In the hair cortex, hair keratin intermediate filaments are embedded in an interfilamentous matrix, consisting of hair keratin-associated protein (KRTAP), which are essential for the formation of a rigid and resistant hair shaft through their extensive disulfide bond cross-linking with abundant cysteine residues of hair keratins. The matrix proteins include the high-sulfur and high-glycine-tyrosine keratins. In Homo sapiens (Human), this protein is Keratin-associated protein 5-7 (KRTAP5-7).